We begin with the raw amino-acid sequence, 552 residues long: Urocanate hydratase (552 aa).

NAD(+)-binding positions include 49–50, Q127, 173–175, E193, R198, 239–240, 260–264, 270–271, and Y319; these read GG, GMG, NA, QTSAH, and YI. The active site involves C407. G489 provides a ligand contact to NAD(+).

It belongs to the urocanase family. NAD(+) is required as a cofactor.

It is found in the cytoplasm. The enzyme catalyses 4-imidazolone-5-propanoate = trans-urocanate + H2O. It functions in the pathway amino-acid degradation; L-histidine degradation into L-glutamate; N-formimidoyl-L-glutamate from L-histidine: step 2/3. Its function is as follows. Catalyzes the conversion of urocanate to 4-imidazolone-5-propionate. The sequence is that of Urocanate hydratase from Geobacillus sp. (strain WCH70).